Here is a 261-residue protein sequence, read N- to C-terminus: Carnitinyl-CoA dehydratase (261 aa).

Catalysis depends on Glu111, which acts as the Nucleophile. Glu131 acts as the Proton acceptor in catalysis.

It belongs to the enoyl-CoA hydratase/isomerase family.

The enzyme catalyses (R)-carnitinyl-CoA = crotonobetainyl-CoA + H2O. Its pathway is amine and polyamine metabolism; carnitine metabolism. Catalyzes the reversible dehydration of L-carnitinyl-CoA to crotonobetainyl-CoA. In Salmonella enteritidis PT4 (strain P125109), this protein is Carnitinyl-CoA dehydratase.